We begin with the raw amino-acid sequence, 265 residues long: Basic leucine zipper 6 (265 aa).

2 disordered regions span residues 1–24 (MAQLPPKIPVAAPGHHQHWASAGG) and 77–139 (LMSM…RDPK). Residues 85–97 (GGSSAPGSDNGGS) show a composition bias toward low complexity. Polar residues predominate over residues 122-132 (TQEQAAATSPT). The bZIP domain occupies 137–189 (DPKRVKRILANRQSAQRSRVRKLQYISELERSVTTLQNEVSVLSPRVAFLDQQ). The segment at 139–158 (KRVKRILANRQSAQRSRVRK) is basic motif. Residues 165 to 186 (LERSVTTLQNEVSVLSPRVAFL) are leucine-zipper. Residues 239–265 (LSGGLAADHAHVHGGPPPVRAEKELMS) form a disordered region.

In terms of tissue distribution, expressed in roots, shoots and panicles.

It is found in the nucleus. In terms of biological role, transcription regulator. The polypeptide is Basic leucine zipper 6 (BZIP06) (Oryza sativa subsp. japonica (Rice)).